Reading from the N-terminus, the 839-residue chain is Putative AC9 transposase (839 aa).

Positions 32-43 (SSSNANGTATDP) are enriched in polar residues. The tract at residues 32-85 (SSSNANGTATDPSQDDMAIVHEPQPQPQPQPEPQPQPQPEPEEEAPQKRAKKCT) is disordered. The segment covering 55–70 (QPQPQPQPEPQPQPQP) has biased composition (pro residues).

The protein is Putative AC9 transposase of Zea mays (Maize).